Reading from the N-terminus, the 227-residue chain is MDIERINDHTMKFFITYIDIEDRGFNREEIWYDRERSEELFWEMMDEARDHDDFFIDGPLWIQVQAVDKGIEVLVTKAELSKDGQKLELPIGVDKIIDIPLDEGIESLFQQELVEEVEEQAGTNFNEDGTFGFLIKFNDFEDVISLSHRLIFEDIKDELYSFEDRYYVYVEFDEVLHDEEEIDRILSIVLEYGEESTLTIHRVSEYGKQIVKEHALETIRNNFPAKT.

Belongs to the MecA family. As to quaternary structure, homodimer.

Functionally, enables the recognition and targeting of unfolded and aggregated proteins to the ClpC protease or to other proteins involved in proteolysis. Acts negatively in the development of competence by binding ComK and recruiting it to the ClpCP protease. When overexpressed, inhibits sporulation. Also involved in Spx degradation by ClpC. The protein is Adapter protein MecA 1 (mecA1) of Bacillus anthracis.